The primary structure comprises 342 residues: UDP-3-O-acylglucosamine N-acyltransferase (342 aa).

The active-site Proton acceptor is histidine 234.

It belongs to the transferase hexapeptide repeat family. LpxD subfamily. In terms of assembly, homotrimer.

It catalyses the reaction a UDP-3-O-[(3R)-3-hydroxyacyl]-alpha-D-glucosamine + a (3R)-hydroxyacyl-[ACP] = a UDP-2-N,3-O-bis[(3R)-3-hydroxyacyl]-alpha-D-glucosamine + holo-[ACP] + H(+). The protein operates within bacterial outer membrane biogenesis; LPS lipid A biosynthesis. Its function is as follows. Catalyzes the N-acylation of UDP-3-O-acylglucosamine using 3-hydroxyacyl-ACP as the acyl donor. Is involved in the biosynthesis of lipid A, a phosphorylated glycolipid that anchors the lipopolysaccharide to the outer membrane of the cell. The polypeptide is UDP-3-O-acylglucosamine N-acyltransferase (Oleidesulfovibrio alaskensis (strain ATCC BAA-1058 / DSM 17464 / G20) (Desulfovibrio alaskensis)).